The following is a 237-amino-acid chain: Ribonuclease PH (237 aa).

Residues Arg86 and 124–126 (GTR) each bind phosphate.

It belongs to the RNase PH family. As to quaternary structure, homohexameric ring arranged as a trimer of dimers.

The catalysed reaction is tRNA(n+1) + phosphate = tRNA(n) + a ribonucleoside 5'-diphosphate. In terms of biological role, phosphorolytic 3'-5' exoribonuclease that plays an important role in tRNA 3'-end maturation. Removes nucleotide residues following the 3'-CCA terminus of tRNAs; can also add nucleotides to the ends of RNA molecules by using nucleoside diphosphates as substrates, but this may not be physiologically important. Probably plays a role in initiation of 16S rRNA degradation (leading to ribosome degradation) during starvation. This chain is Ribonuclease PH, found in Methylorubrum extorquens (strain PA1) (Methylobacterium extorquens).